A 2107-amino-acid polypeptide reads, in one-letter code: Dysferlin (2107 aa).

Residues 1–101 (MLRVFILYAE…LATPSLSASF (101 aa)) form the C2 1 domain. Residues Asp-18, Ile-19, Asp-21, and Asn-40 each contribute to the Ca(2+) site. Over residues 132 to 144 (TFPPLTPLEPSPT) the composition is skewed to pro residues. The segment at 132–221 (TFPPLTPLEP…SKPLSDKPQD (90 aa)) is disordered. Positions 155–172 (GGEEDTEDQGLTGDEAEP) are enriched in acidic residues. Thr-166 carries the post-translational modification Phosphothreonine. C2 domains are found at residues 205-323 (KRSA…RKWL), 362-498 (DKED…EEEP), 1138-1264 (GVNR…PLTR), 1312-1440 (PPPQ…EESP), 1588-1706 (PLPP…ARCG), and 1822-1970 (GRPG…EKCS). Ca(2+) contacts are provided by Asp-411, Asp-419, Asp-467, Asp-469, Asp-475, Asp-1170, Asp-1176, Asp-1232, and Asp-1234. The Ca(2+) site is built by Asp-1621, Asp-1627, Asp-1676, Asp-1678, Asp-1941, Ser-1944, and Asp-1947. The tract at residues 2021–2044 (ESEHEERPAGHGRDEPNMNPKLED) is disordered. Residues 2074-2094 (IIFFLILFIFLLFLGIFVYSF) traverse the membrane as a helical segment.

Belongs to the ferlin family. Interacts with CACNA1S, CAV3 and PARVB. Interacts with ANXA1; the interaction is Ca(2+)- and injury state-dependent. Interacts with ANXA2; the interaction is Ca(2+)- and injury state-dependent. Interacts with AHNAK; the interaction is direct and Ca(2+)-independent. Interacts with AHNAK2; the interaction is direct and Ca(2+)-independent. Interacts with TRIM72/MG53; interaction is required for transport to sites of cell injury during repair patch formation. Interacts with RIPOR2; this interaction occurs during early myogenic differentiation. The cofactor is Ca(2+).

The protein resides in the cell membrane. It is found in the sarcolemma. The protein localises to the cytoplasmic vesicle membrane. Key calcium ion sensor involved in the Ca(2+)-triggered synaptic vesicle-plasma membrane fusion. Plays a role in the sarcolemma repair mechanism of both skeletal muscle and cardiomyocytes that permits rapid resealing of membranes disrupted by mechanical stress. The sequence is that of Dysferlin (DYSF) from Bos taurus (Bovine).